Reading from the N-terminus, the 86-residue chain is Cell division topological specificity factor (86 aa).

Belongs to the MinE family.

In terms of biological role, prevents the cell division inhibition by proteins MinC and MinD at internal division sites while permitting inhibition at polar sites. This ensures cell division at the proper site by restricting the formation of a division septum at the midpoint of the long axis of the cell. The polypeptide is Cell division topological specificity factor (Alteromonas mediterranea (strain DSM 17117 / CIP 110805 / LMG 28347 / Deep ecotype)).